A 228-amino-acid chain; its full sequence is Urease accessory protein UreF (228 aa).

This sequence belongs to the UreF family. UreD, UreF and UreG form a complex that acts as a GTP-hydrolysis-dependent molecular chaperone, activating the urease apoprotein by helping to assemble the nickel containing metallocenter of UreC. The UreE protein probably delivers the nickel.

It is found in the cytoplasm. Functionally, required for maturation of urease via the functional incorporation of the urease nickel metallocenter. The polypeptide is Urease accessory protein UreF (Brucella ovis (strain ATCC 25840 / 63/290 / NCTC 10512)).